Consider the following 644-residue polypeptide: DNA gyrase subunit B (644 aa).

One can recognise a Toprim domain in the interval 429-543 (CEIFLVEGDS…AGYVYIAQPP (115 aa)). Mg(2+) is bound by residues Glu435, Asp508, and Asp510.

This sequence belongs to the type II topoisomerase GyrB family. In terms of assembly, heterotetramer, composed of two GyrA and two GyrB chains. In the heterotetramer, GyrA contains the active site tyrosine that forms a transient covalent intermediate with DNA, while GyrB binds cofactors and catalyzes ATP hydrolysis. It depends on Mg(2+) as a cofactor. Requires Mn(2+) as cofactor. The cofactor is Ca(2+).

The protein localises to the cytoplasm. The enzyme catalyses ATP-dependent breakage, passage and rejoining of double-stranded DNA.. Its function is as follows. A type II topoisomerase that negatively supercoils closed circular double-stranded (ds) DNA in an ATP-dependent manner to modulate DNA topology and maintain chromosomes in an underwound state. Negative supercoiling favors strand separation, and DNA replication, transcription, recombination and repair, all of which involve strand separation. Also able to catalyze the interconversion of other topological isomers of dsDNA rings, including catenanes and knotted rings. Type II topoisomerases break and join 2 DNA strands simultaneously in an ATP-dependent manner. This is DNA gyrase subunit B from Staphylococcus aureus (strain COL).